The sequence spans 205 residues: Small ribosomal subunit protein uS4 (205 aa).

The region spanning 93–171 (SRVSSVLYRS…SPHYLEVDRE (79 aa)) is the S4 RNA-binding domain.

It belongs to the universal ribosomal protein uS4 family. Part of the 30S ribosomal subunit. Contacts protein S5. The interaction surface between S4 and S5 is involved in control of translational fidelity.

Its function is as follows. One of the primary rRNA binding proteins, it binds directly to 16S rRNA where it nucleates assembly of the body of the 30S subunit. With S5 and S12 plays an important role in translational accuracy. The chain is Small ribosomal subunit protein uS4 from Neorickettsia sennetsu (strain ATCC VR-367 / Miyayama) (Ehrlichia sennetsu).